A 157-amino-acid chain; its full sequence is Arginine regulator (157 aa).

Belongs to the ArgR family.

It is found in the cytoplasm. Its pathway is amino-acid degradation; L-arginine degradation via ADI pathway. Its function is as follows. Regulates the transcription of the arc operon, involved in arginine catabolism. The protein is Arginine regulator (argR1) of Streptococcus pyogenes serotype M3 (strain SSI-1).